The sequence spans 205 residues: Guanylate kinase (205 aa).

A Guanylate kinase-like domain is found at 19–197; the sequence is PKLFTISAPA…AYRVLKSIFI (179 aa). 26–33 lines the ATP pocket; that stretch reads APAGVGKT.

It belongs to the guanylate kinase family.

It is found in the cytoplasm. The enzyme catalyses GMP + ATP = GDP + ADP. Functionally, essential for recycling GMP and indirectly, cGMP. In Chlamydia pneumoniae (Chlamydophila pneumoniae), this protein is Guanylate kinase (gmk).